Reading from the N-terminus, the 131-residue chain is Small ribosomal subunit protein bS6 (131 aa).

The tract at residues 98–131 (EASPMVKAKDERRERRDDFANETADDAEAGDSEE) is disordered. Residues 104 to 116 (KAKDERRERRDDF) are compositionally biased toward basic and acidic residues. The segment covering 120-131 (TADDAEAGDSEE) has biased composition (acidic residues).

Belongs to the bacterial ribosomal protein bS6 family.

Its function is as follows. Binds together with bS18 to 16S ribosomal RNA. The polypeptide is Small ribosomal subunit protein bS6 (Salmonella dublin (strain CT_02021853)).